Here is a 107-residue protein sequence, read N- to C-terminus: Phosphoribosyl-ATP pyrophosphatase (107 aa).

This sequence belongs to the PRA-PH family.

The protein localises to the cytoplasm. It carries out the reaction 1-(5-phospho-beta-D-ribosyl)-ATP + H2O = 1-(5-phospho-beta-D-ribosyl)-5'-AMP + diphosphate + H(+). Its pathway is amino-acid biosynthesis; L-histidine biosynthesis; L-histidine from 5-phospho-alpha-D-ribose 1-diphosphate: step 2/9. The protein is Phosphoribosyl-ATP pyrophosphatase of Caulobacter sp. (strain K31).